A 790-amino-acid chain; its full sequence is Exocyst complex component SEC15A (790 aa).

The stretch at 49-70 (LVHQLKNVARKKEAEIEDLCKT) forms a coiled coil.

It belongs to the SEC15 family. The exocyst complex is composed of SEC3, SEC5, SEC6, SEC8, SEC10, EXO70A1 and EXO84B.

It localises to the cytoplasm. Its subcellular location is the cytosol. Its function is as follows. Component of the exocyst complex involved in the docking of exocytic vesicles with fusion sites on the plasma membrane during regulated or polarized secretion. Involved in polarized cell growth and organ morphogenesis. During cytokinesis, involved in cell plate initiation, cell plate maturation and formation of new primary cell wall. This Arabidopsis thaliana (Mouse-ear cress) protein is Exocyst complex component SEC15A (SEC15A).